We begin with the raw amino-acid sequence, 341 residues long: Glycerol-3-phosphate dehydrogenase [NAD(P)+] 1 (341 aa).

Serine 17, tryptophan 18, arginine 37, and lysine 112 together coordinate NADPH. 2 residues coordinate sn-glycerol 3-phosphate: lysine 112 and glycine 140. Residue alanine 144 participates in NADPH binding. Residues lysine 195, aspartate 248, serine 258, arginine 259, and asparagine 260 each coordinate sn-glycerol 3-phosphate. Residue lysine 195 is the Proton acceptor of the active site. Residue arginine 259 coordinates NADPH. Positions 283 and 285 each coordinate NADPH.

The protein belongs to the NAD-dependent glycerol-3-phosphate dehydrogenase family.

It is found in the cytoplasm. It catalyses the reaction sn-glycerol 3-phosphate + NAD(+) = dihydroxyacetone phosphate + NADH + H(+). The enzyme catalyses sn-glycerol 3-phosphate + NADP(+) = dihydroxyacetone phosphate + NADPH + H(+). It functions in the pathway membrane lipid metabolism; glycerophospholipid metabolism. Catalyzes the reduction of the glycolytic intermediate dihydroxyacetone phosphate (DHAP) to sn-glycerol 3-phosphate (G3P), the key precursor for phospholipid synthesis. This Mycobacterium bovis (strain ATCC BAA-935 / AF2122/97) protein is Glycerol-3-phosphate dehydrogenase [NAD(P)+] 1.